A 301-amino-acid polypeptide reads, in one-letter code: MLLWAGYASEKQVSIMTGNEMIAHLDKNKYEIVPITLNEKMDLIEKAKDIDFALLALHGKYGEDGTVQGTLESLGIPYSGSNMLSSSICMDKNISKKILRYEGVETPDWIELTKMEDLNLDELDKLGFPLVVKPNSGGSSVGVKIVYNKNELISMLETVFEWDSEVVIEKYIKGDEITCSILDGKQLPIVSIRHAAEFFDYNAKYDDTSTVEEVIELPAQIKERVNKASLTCYKALKCSVYARVDMMVKDGIPYVMEINTLPGMTQSSLLPKSAEAAGISYSKLLDMIIETSLKVRNEEGF.

The region spanning 96-290 is the ATP-grasp domain; that stretch reads KKILRYEGVE…YSKLLDMIIE (195 aa). 123–178 provides a ligand contact to ATP; sequence LDKLGFPLVVKPNSGGSSVGVKIVYNKNELISMLETVFEWDSEVVIEKYIKGDEIT. Residues aspartate 245, glutamate 257, and asparagine 259 each coordinate Mg(2+).

This sequence belongs to the D-alanine--D-alanine ligase family. Requires Mg(2+) as cofactor. The cofactor is Mn(2+).

The protein resides in the cytoplasm. It carries out the reaction 2 D-alanine + ATP = D-alanyl-D-alanine + ADP + phosphate + H(+). The protein operates within cell wall biogenesis; peptidoglycan biosynthesis. Functionally, cell wall formation. In Bacillus cereus (strain ATCC 14579 / DSM 31 / CCUG 7414 / JCM 2152 / NBRC 15305 / NCIMB 9373 / NCTC 2599 / NRRL B-3711), this protein is D-alanine--D-alanine ligase A.